We begin with the raw amino-acid sequence, 225 residues long: Uracil-DNA glycosylase (225 aa).

Aspartate 65 acts as the Proton acceptor in catalysis.

This sequence belongs to the uracil-DNA glycosylase (UDG) superfamily. UNG family.

Its subcellular location is the cytoplasm. The enzyme catalyses Hydrolyzes single-stranded DNA or mismatched double-stranded DNA and polynucleotides, releasing free uracil.. Excises uracil residues from the DNA which can arise as a result of misincorporation of dUMP residues by DNA polymerase or due to deamination of cytosine. This is Uracil-DNA glycosylase from Bacillus cytotoxicus (strain DSM 22905 / CIP 110041 / 391-98 / NVH 391-98).